Consider the following 578-residue polypeptide: Arginine--tRNA ligase (578 aa).

The 'HIGH' region signature appears at 127–137 (PNLAKEMHVGH).

The protein belongs to the class-I aminoacyl-tRNA synthetase family. As to quaternary structure, monomer.

It is found in the cytoplasm. It carries out the reaction tRNA(Arg) + L-arginine + ATP = L-arginyl-tRNA(Arg) + AMP + diphosphate. The sequence is that of Arginine--tRNA ligase from Pseudomonas fluorescens (strain ATCC BAA-477 / NRRL B-23932 / Pf-5).